A 496-amino-acid chain; its full sequence is Ammonium transporter 1 member 2 (496 aa).

11 consecutive transmembrane segments (helical) span residues 39-59 (LLFSAYLVFAMQLGFAMLCAG), 74-94 (VLDAAAGALFYYLFGFAFAFG), 120-140 (FFLFQWAFAIAAAGITSGSIA), 148-168 (YLIYSAFLTGFVYPVVSHWIW), 192-212 (FAGSGVVHMVGGVAGLWGALI), 236-256 (LVVLGSFLLWFGWYGFNPGSF), 274-296 (SAVGRTAVTTTLAGSTAALTTLF), 307-327 (VIDVCNGLLGGFAAITAGCSV), 331-351 (WAAIICGFVSAWVLIGLNALA), 360-380 (LEAAQLHGGCGAWGVIFTALF), and 412-432 (IVVILVIAAWVSFTMAPLFLV).

Belongs to the ammonia transporter channel (TC 1.A.11.2) family. As to expression, expressed in exodermis, sclerenchyma, endodermis and pericycle cells of primary root tips.

The protein localises to the membrane. In terms of biological role, ammonium transporter probably involved in ammonium uptake from the soil and ammonium uptake and retrieval in the vascular system. In Oryza sativa subsp. japonica (Rice), this protein is Ammonium transporter 1 member 2 (AMT1-2).